Reading from the N-terminus, the 499-residue chain is Maturase K (499 aa).

Belongs to the intron maturase 2 family. MatK subfamily.

The protein resides in the plastid. The protein localises to the chloroplast. In terms of biological role, usually encoded in the trnK tRNA gene intron. Probably assists in splicing its own and other chloroplast group II introns. The protein is Maturase K of Gymnocladus chinensis (Soap tree).